Consider the following 97-residue polypeptide: Secreted Ly-6/uPAR domain-containing protein 2 (97 aa).

An N-terminal signal peptide occupies residues 1–22 (MQFHTGLLLAAVLSLQLAAAQA). The UPAR/Ly6 domain occupies 23–95 (LWCHQCTGFG…IACCQTSLCN (73 aa)). Intrachain disulfides connect Cys-25-Cys-47, Cys-28-Cys-34, Cys-40-Cys-68, Cys-72-Cys-88, and Cys-89-Cys-94.

In terms of assembly, interacts with CHRNA3, CHRNA4, CHRNA5, CHRNA7, CHRNB2 and CHRNB4. Interacts with CHRM1 and CHRM3 probably in an allosteric manner.

Its subcellular location is the secreted. In terms of biological role, binds and may modulate the functional properties of nicotinic and muscarinic acetylcholine receptors. May regulate keratinocytes proliferation, differentiation and apoptosis. In vitro moderately inhibits ACh-evoked currents of alpha-3:beta-2-containing nAChRs, strongly these of alpha-4:beta-2-containing nAChRs, modulates alpha-7-containing nAChRs, and inhibits nicotine-induced signaling probably implicating alpha-3:beta-4-containing nAChRs. Proposed to act on alpha-3:beta-2 and alpha-7 nAChRs in an orthosteric, and on mAChRs, such as CHRM1 and CHRM3, in an allosteric manner. The sequence is that of Secreted Ly-6/uPAR domain-containing protein 2 from Macaca mulatta (Rhesus macaque).